Consider the following 420-residue polypeptide: Tyrosine--tRNA ligase (420 aa).

An L-tyrosine-binding site is contributed by Y33. Positions 38 to 47 (PTGPSLHAGH) match the 'HIGH' region motif. L-tyrosine contacts are provided by Y167 and Q171. The 'KMSKS' region signature appears at 227-231 (KFGKS). K230 serves as a coordination point for ATP. Positions 352–418 (RTIIDLLVAS…GKKNFAGVQI (67 aa)) constitute an S4 RNA-binding domain.

It belongs to the class-I aminoacyl-tRNA synthetase family. TyrS type 1 subfamily. Homodimer.

The protein resides in the cytoplasm. It catalyses the reaction tRNA(Tyr) + L-tyrosine + ATP = L-tyrosyl-tRNA(Tyr) + AMP + diphosphate + H(+). Catalyzes the attachment of tyrosine to tRNA(Tyr) in a two-step reaction: tyrosine is first activated by ATP to form Tyr-AMP and then transferred to the acceptor end of tRNA(Tyr). This chain is Tyrosine--tRNA ligase, found in Corynebacterium glutamicum (strain ATCC 13032 / DSM 20300 / JCM 1318 / BCRC 11384 / CCUG 27702 / LMG 3730 / NBRC 12168 / NCIMB 10025 / NRRL B-2784 / 534).